Reading from the N-terminus, the 268-residue chain is UPF0328 protein ECU05_1640/ECU11_0090 (268 aa).

This sequence belongs to the UPF0328 family.

This is UPF0328 protein ECU05_1640/ECU11_0090 from Encephalitozoon cuniculi (strain GB-M1) (Microsporidian parasite).